A 237-amino-acid chain; its full sequence is Uridylate kinase (237 aa).

Position 11–14 (11–14 (KLSG)) interacts with ATP. Gly-52 provides a ligand contact to UMP. ATP is bound by residues Gly-53 and Arg-57. UMP-binding positions include Asp-72 and 134-141 (TGYSYFTT). 3 residues coordinate ATP: Asn-162, Tyr-168, and Asp-171.

The protein belongs to the UMP kinase family. As to quaternary structure, homohexamer.

It is found in the cytoplasm. The enzyme catalyses UMP + ATP = UDP + ADP. The protein operates within pyrimidine metabolism; CTP biosynthesis via de novo pathway; UDP from UMP (UMPK route): step 1/1. With respect to regulation, inhibited by UTP. Functionally, catalyzes the reversible phosphorylation of UMP to UDP. This is Uridylate kinase from Mycoplasma capricolum subsp. capricolum (strain California kid / ATCC 27343 / NCTC 10154).